The primary structure comprises 500 residues: FAD-linked oxidoreductase easE (500 aa).

The region spanning 37 to 220 (QGRIPLFTVG…TRATMRVFPD (184 aa)) is the FAD-binding PCMH-type domain.

The protein belongs to the oxygen-dependent FAD-linked oxidoreductase family. FAD serves as cofactor.

The protein operates within alkaloid biosynthesis; ergot alkaloid biosynthesis. FAD-linked oxidoreductase; part of the gene cluster that mediates the biosynthesis of fungal ergot alkaloid. DmaW catalyzes the first step of ergot alkaloid biosynthesis by condensing dimethylallyl diphosphate (DMAP) and tryptophan to form 4-dimethylallyl-L-tryptophan. The second step is catalyzed by the methyltransferase easF that methylates 4-dimethylallyl-L-tryptophan in the presence of S-adenosyl-L-methionine, resulting in the formation of 4-dimethylallyl-L-abrine. The catalase easC and the FAD-dependent oxidoreductase easE then transform 4-dimethylallyl-L-abrine to chanoclavine-I which is further oxidized by easD in the presence of NAD(+), resulting in the formation of chanoclavine-I aldehyde. Chanoclavine-I aldehyde is the precursor of ergoamides and ergopeptines in Clavicipitaceae, and clavine-type alcaloids such as fumiclavine in Trichocomaceae. However, the metabolites downstream of chanoclavine-I aldehyde in Arthrodermataceae have not been identified yet. This is FAD-linked oxidoreductase easE from Arthroderma benhamiae (strain ATCC MYA-4681 / CBS 112371) (Trichophyton mentagrophytes).